The primary structure comprises 338 residues: Probable tRNA pseudouridine synthase B (338 aa).

Aspartate 78 (nucleophile) is an active-site residue. The PUA domain maps to 245 to 320 (LPKIILRDSA…IAASPIRVLM (76 aa)).

This sequence belongs to the pseudouridine synthase TruB family. Type 2 subfamily.

The catalysed reaction is uridine(55) in tRNA = pseudouridine(55) in tRNA. Its function is as follows. Could be responsible for synthesis of pseudouridine from uracil-55 in the psi GC loop of transfer RNAs. This is Probable tRNA pseudouridine synthase B from Methanosarcina acetivorans (strain ATCC 35395 / DSM 2834 / JCM 12185 / C2A).